Consider the following 190-residue polypeptide: MDLISHQPNKNPNSSTQLTPPSSSRYENQKRRDWNTFCQYLRNHRPPLSLPSCSGAHVLEFLRYLDQFGKTKVHHQNCAFFGLPNPPAPCPCPLRQAWGSLDALIGRLRAAYEENGGPPEANPFGSRAVRLFLREVRDFQAKARGVSYEKKRKRVNRQKPQTQPPLQLQQQQQQPQQGQSMMANYSGATV.

Over residues 1–26 (MDLISHQPNKNPNSSTQLTPPSSSRY) the composition is skewed to polar residues. Disordered regions lie at residues 1–28 (MDLISHQPNKNPNSSTQLTPPSSSRYEN) and 145–190 (GVSY…GATV). Residues 25–152 (RYENQKRRDW…ARGVSYEKKR (128 aa)) enclose the ALOG domain. Positions 150–154 (KKRKR) match the Nuclear localization signal motif. Over residues 158 to 179 (QKPQTQPPLQLQQQQQQPQQGQ) the composition is skewed to low complexity. Over residues 180–190 (SMMANYSGATV) the composition is skewed to polar residues.

This sequence belongs to the plant homeotic and developmental regulators ALOG protein family. Expressed in hypocotyls, shoot apices and lateral root primordia and, weakly, in vascular tissues.

The protein resides in the nucleus. Functionally, probable transcription regulator that acts as a developmental regulator by promoting cell growth in response to continuous red (cR), far-red (cFR) and blue (cB) light in a phytochrome-dependent manner, at least during seedling development. The polypeptide is Protein LIGHT-DEPENDENT SHORT HYPOCOTYLS 1 (LSH1) (Arabidopsis thaliana (Mouse-ear cress)).